A 155-amino-acid chain; its full sequence is Protein SREK1IP1 (155 aa).

The segment at 13 to 30 (AGCKKCGYPGHLTFECRN) adopts a CCHC-type zinc-finger fold. Residues 44–155 (VSSTSSEDSD…TPNSSEFSRK (112 aa)) form a disordered region. Ser52 is modified (phosphoserine). The segment covering 66–84 (QEKRINEEEEKKKEKSKEK) has biased composition (basic and acidic residues). The segment covering 85–94 (IKLKKKRKRS) has biased composition (basic residues). Ser96 and Ser97 each carry phosphoserine. Basic residues predominate over residues 107–142 (QKKQKYQKKEKKKEKKSKSKKGKHHKKEKKKRKKEK). Thr146 is modified (phosphothreonine). Positions 146–155 (TPNSSEFSRK) are enriched in polar residues.

As to quaternary structure, interacts with SREK1/SFRS12.

In terms of biological role, possible splicing regulator involved in the control of cellular survival. The sequence is that of Protein SREK1IP1 (SREK1IP1) from Homo sapiens (Human).